The sequence spans 303 residues: ATP synthase gamma chain (303 aa).

Belongs to the ATPase gamma chain family. As to quaternary structure, F-type ATPases have 2 components, CF(1) - the catalytic core - and CF(0) - the membrane proton channel. CF(1) has five subunits: alpha(3), beta(3), gamma(1), delta(1), epsilon(1). CF(0) has three main subunits: a, b and c.

Its subcellular location is the cell membrane. In terms of biological role, produces ATP from ADP in the presence of a proton gradient across the membrane. The gamma chain is believed to be important in regulating ATPase activity and the flow of protons through the CF(0) complex. The polypeptide is ATP synthase gamma chain (Nocardioides sp. (strain ATCC BAA-499 / JS614)).